An 81-amino-acid chain; its full sequence is Acyl carrier protein (81 aa).

The region spanning 2–80 is the Carrier domain; that stretch reads ASKEEILAGL…DAVDFIDGAQ (79 aa). Ser40 carries the post-translational modification O-(pantetheine 4'-phosphoryl)serine.

This sequence belongs to the acyl carrier protein (ACP) family. Post-translationally, 4'-phosphopantetheine is transferred from CoA to a specific serine of apo-ACP by AcpS. This modification is essential for activity because fatty acids are bound in thioester linkage to the sulfhydryl of the prosthetic group.

The protein localises to the cytoplasm. It functions in the pathway lipid metabolism; fatty acid biosynthesis. In terms of biological role, carrier of the growing fatty acid chain in fatty acid biosynthesis. In Micrococcus luteus (strain ATCC 4698 / DSM 20030 / JCM 1464 / CCM 169 / CCUG 5858 / IAM 1056 / NBRC 3333 / NCIMB 9278 / NCTC 2665 / VKM Ac-2230) (Micrococcus lysodeikticus), this protein is Acyl carrier protein.